A 156-amino-acid chain; its full sequence is ATP synthase subunit b', chloroplastic (156 aa).

Residues 24–44 (ATLPLVAIQFILLMVTLNIIL) form a helical membrane-spanning segment.

Belongs to the ATPase B chain family. F-type ATPases have 2 components, F(1) - the catalytic core - and F(0) - the membrane proton channel. F(1) has five subunits: alpha(3), beta(3), gamma(1), delta(1), epsilon(1). F(0) has four main subunits: a(1), b(1), b'(1) and c(10-14). The alpha and beta chains form an alternating ring which encloses part of the gamma chain. F(1) is attached to F(0) by a central stalk formed by the gamma and epsilon chains, while a peripheral stalk is formed by the delta, b and b' chains.

It is found in the plastid. It localises to the chloroplast thylakoid membrane. F(1)F(0) ATP synthase produces ATP from ADP in the presence of a proton or sodium gradient. F-type ATPases consist of two structural domains, F(1) containing the extramembraneous catalytic core and F(0) containing the membrane proton channel, linked together by a central stalk and a peripheral stalk. During catalysis, ATP synthesis in the catalytic domain of F(1) is coupled via a rotary mechanism of the central stalk subunits to proton translocation. Its function is as follows. Component of the F(0) channel, it forms part of the peripheral stalk, linking F(1) to F(0). The b'-subunit is a diverged and duplicated form of b found in plants and photosynthetic bacteria. This Thalassiosira pseudonana (Marine diatom) protein is ATP synthase subunit b', chloroplastic.